The primary structure comprises 206 residues: MAKYLGPKLKLSRREGTDLFLKSGVRAIESKCKIDHLPGQHGSRRSRLSDYGIQLREKQKLRRMYVILERQFKKYYKKAVRMKGNTGENLLILLESRLDNVVYRMGFGSTRLESRQLISHKSIIINKKVINIPSYQIKPNDCIEVKEIAKKQSRIKAAIEISEQREKQSWIDVDRVKMQGIFKKFPDRSDLSSEINEHLIIELYSK.

One can recognise an S4 RNA-binding domain in the interval 96–158; that stretch reads SRLDNVVYRM…AKKQSRIKAA (63 aa).

Belongs to the universal ribosomal protein uS4 family. Part of the 30S ribosomal subunit. Contacts protein S5. The interaction surface between S4 and S5 is involved in control of translational fidelity.

Its function is as follows. One of the primary rRNA binding proteins, it binds directly to 16S rRNA where it nucleates assembly of the body of the 30S subunit. In terms of biological role, with S5 and S12 plays an important role in translational accuracy. The protein is Small ribosomal subunit protein uS4 of Wigglesworthia glossinidia brevipalpis.